Consider the following 292-residue polypeptide: Calponin-1 (292 aa).

Residues 28-131 (PQTERQLRVW…STLIALASQA (104 aa)) enclose the Calponin-homology (CH) domain. 3 Calponin-like repeats span residues 164–189 (IGLQ…RHLY), 204–229 (ISLQ…RQIF), and 243–268 (IGLQ…RQVY). Position 170 is a phosphothreonine; by ROCK2 (T170). S175 carries the phosphoserine; by PKC, CaMK2 and ROCK2 modification. T180 and T184 each carry phosphothreonine; by ROCK2. Position 184 is a phosphothreonine; by PKC and CaMK2 (T184). Residues 185–193 (RRHLYDPKL) form a calmodulin-binding region. At T259 the chain carries Phosphothreonine; by ROCK2.

This sequence belongs to the calponin family. Post-translationally, phosphorylation by PKC or CaM kinase II reduces the binding of calponin to F-actin and tropomyosin. As to expression, smooth muscle, and tissues containing significant amounts of smooth muscle.

In terms of biological role, thin filament-associated protein that is implicated in the regulation and modulation of smooth muscle contraction. It is capable of binding to actin, calmodulin and tropomyosin. The interaction of calponin with actin inhibits the actomyosin Mg-ATPase activity. This is Calponin-1 (CNN1) from Gallus gallus (Chicken).